We begin with the raw amino-acid sequence, 365 residues long: Putative agmatine deiminase (365 aa).

The active-site Amidino-cysteine intermediate is the Cys-356.

Belongs to the agmatine deiminase family.

It carries out the reaction agmatine + H2O = N-carbamoylputrescine + NH4(+). This Latilactobacillus sakei subsp. sakei (strain 23K) (Lactobacillus sakei subsp. sakei) protein is Putative agmatine deiminase.